The following is a 672-amino-acid chain: Serine/threonine-protein kinase ppk16 (672 aa).

Residues Tyr-31–Phe-279 form the Protein kinase domain. Residues Val-37 to Val-45 and Lys-60 each bind ATP. Asp-148 acts as the Proton acceptor in catalysis. Position 231 is a phosphoserine (Ser-231). A compositionally biased stretch (polar residues) spans Val-375–Ser-384. Disordered stretches follow at residues Val-375–Asn-396, Asp-416–Leu-436, Asn-464–Val-572, and Ser-632–Leu-672. Polar residues predominate over residues Asn-472 to Pro-487. Residues Ser-508–Asn-523 are compositionally biased toward low complexity. Polar residues predominate over residues Leu-531–Thr-541. Low complexity-rich tracts occupy residues Arg-549–Val-572 and Ser-639–Ser-649.

The protein belongs to the protein kinase superfamily. Ser/Thr protein kinase family.

It localises to the cytoplasm. The enzyme catalyses L-seryl-[protein] + ATP = O-phospho-L-seryl-[protein] + ADP + H(+). It catalyses the reaction L-threonyl-[protein] + ATP = O-phospho-L-threonyl-[protein] + ADP + H(+). Functionally, has a role in meiosis. This is Serine/threonine-protein kinase ppk16 (ppk16) from Schizosaccharomyces pombe (strain 972 / ATCC 24843) (Fission yeast).